The following is a 423-amino-acid chain: 3-phosphoshikimate 1-carboxyvinyltransferase (423 aa).

3 residues coordinate 3-phosphoshikimate: K21, S22, and R26. K21 provides a ligand contact to phosphoenolpyruvate. The phosphoenolpyruvate site is built by G92 and R120. 3-phosphoshikimate contacts are provided by S166, Q168, S194, D310, and K337. Residue Q168 participates in phosphoenolpyruvate binding. D310 acts as the Proton acceptor in catalysis. Residues R341, R384, and K409 each coordinate phosphoenolpyruvate.

It belongs to the EPSP synthase family. Monomer.

The protein resides in the cytoplasm. The enzyme catalyses 3-phosphoshikimate + phosphoenolpyruvate = 5-O-(1-carboxyvinyl)-3-phosphoshikimate + phosphate. It functions in the pathway metabolic intermediate biosynthesis; chorismate biosynthesis; chorismate from D-erythrose 4-phosphate and phosphoenolpyruvate: step 6/7. In terms of biological role, catalyzes the transfer of the enolpyruvyl moiety of phosphoenolpyruvate (PEP) to the 5-hydroxyl of shikimate-3-phosphate (S3P) to produce enolpyruvyl shikimate-3-phosphate and inorganic phosphate. The sequence is that of 3-phosphoshikimate 1-carboxyvinyltransferase from Syntrophobacter fumaroxidans (strain DSM 10017 / MPOB).